A 195-amino-acid polypeptide reads, in one-letter code: Thymidine kinase (195 aa).

ATP contacts are provided by residues 15 to 22 and 88 to 91; these read GSMFSGKS and DEVQ. The active-site Proton acceptor is glutamate 89. Phenylalanine 120 serves as a coordination point for substrate. Residues cysteine 145 and cysteine 148 each contribute to the Zn(2+) site. Substrate contacts are provided by residues 170 to 174 and tyrosine 179; that span reads IILVG. Residues cysteine 183 and cysteine 186 each contribute to the Zn(2+) site.

Belongs to the thymidine kinase family. In terms of assembly, homotetramer.

It is found in the cytoplasm. The enzyme catalyses thymidine + ATP = dTMP + ADP + H(+). This is Thymidine kinase from Bacillus cereus (strain ATCC 14579 / DSM 31 / CCUG 7414 / JCM 2152 / NBRC 15305 / NCIMB 9373 / NCTC 2599 / NRRL B-3711).